The following is a 135-amino-acid chain: VapC ribonuclease aq_1901 (135 aa).

The 128-residue stretch at Leu-3 to Asn-130 folds into the PINc domain. A Mg(2+)-binding site is contributed by Asp-5.

It belongs to the PINc/VapC protein family. The cofactor is Mg(2+).

In terms of biological role, toxic component of a type II toxin-antitoxin (TA) system. An RNase. The protein is VapC ribonuclease aq_1901 of Aquifex aeolicus (strain VF5).